The following is a 356-amino-acid chain: MRKVLAIETSCDETSVSIVSNIGDNFKIHSNIIASQIEDHAKWGGVVPELAARKHLELLPFVLEKALAESEIKIEEIDYIASTVAPGLAGCLRVGSITARSLCMLHSKPFLGIHHLEGHLSSILFSENYPKKSFLTLLVSGGHTELIKVDDRRRMQRLGKSFDDAAGEAFDKVGRLLGLSYPGGPAIEKIAKNGDPMKFNLPKCKISDKKGGFLKYDFSFSGLKTAVLRLVERINLDGKDVPIPDIAASFERVVAEVLVERTIKCAKDHRLENVVLVGGVAANNTLRKMMINEASKKSIKVHLAPLNLCTDNAAMIGAAALFRIKFKDHLSSLKLGVAGRLSIEQANTLYEENPPF.

Residues His-115 and His-119 each coordinate Fe cation. Substrate contacts are provided by residues 138 to 142 (LVSGG), Asp-171, Gly-184, and Asn-283. Position 311 (Asp-311) interacts with Fe cation.

Belongs to the KAE1 / TsaD family. Requires Fe(2+) as cofactor.

It is found in the cytoplasm. The catalysed reaction is L-threonylcarbamoyladenylate + adenosine(37) in tRNA = N(6)-L-threonylcarbamoyladenosine(37) in tRNA + AMP + H(+). Required for the formation of a threonylcarbamoyl group on adenosine at position 37 (t(6)A37) in tRNAs that read codons beginning with adenine. Is involved in the transfer of the threonylcarbamoyl moiety of threonylcarbamoyl-AMP (TC-AMP) to the N6 group of A37, together with TsaE and TsaB. TsaD likely plays a direct catalytic role in this reaction. The polypeptide is tRNA N6-adenosine threonylcarbamoyltransferase (Prochlorococcus marinus (strain MIT 9215)).